The following is a 422-amino-acid chain: DNA-directed RNA polymerase III subunit RPC4 (422 aa).

4 disordered regions span residues 1-80 (MSSN…GQQR), 115-190 (KSEG…DDEE), 219-244 (IQEALSEKPTREPTPSVKTEPVGTGL), and 318-350 (RPAVKEEKEDMETQASDPSKKKKNIKKKDTKDA). The Nuclear localization signal motif lies at 25–29 (KPSLK). Residues 28–37 (LKFKPKAVAR) show a composition bias toward basic residues. Positions 38–64 (KSKEEREAAASKVKLEEESKRGNDKKH) are enriched in basic and acidic residues. S137 and S138 each carry phosphoserine. Residues 138-148 (SENEAEDDDNE) are compositionally biased toward acidic residues. Residues 160–170 (MGKEFEARNLI) show a composition bias toward basic and acidic residues. 3 positions are modified to phosphoserine: S178, S182, and S224. Basic and acidic residues predominate over residues 219–229 (IQEALSEKPTR). Phosphothreonine occurs at positions 228 and 232.

The protein belongs to the eukaryotic RPC4/POLR3D RNA polymerase subunit family. In terms of assembly, component of the RNA polymerase III (Pol III) complex consisting of 17 subunits. Interacts with RPC37/RPC5. RPC53/RPC4, RPC37/RPC5 and RPC11/RPC10 probably form a Pol III subcomplex.

It localises to the nucleus. Its function is as follows. DNA-dependent RNA polymerase catalyzes the transcription of DNA into RNA using the four ribonucleoside triphosphates as substrates. Specific peripheric component of RNA polymerase III which synthesizes small RNAs, such as 5S rRNA and tRNAs. Essential for tRNA synthesis. The RPC53/RPC4-RPC37/RPC5 subcomplex is required for terminator recognition and reinitiation. This chain is DNA-directed RNA polymerase III subunit RPC4 (RPC53), found in Saccharomyces cerevisiae (strain ATCC 204508 / S288c) (Baker's yeast).